The sequence spans 306 residues: Curved DNA-binding protein (306 aa).

In terms of domain architecture, J spans Asp5–Trp69.

It localises to the cytoplasm. Its subcellular location is the nucleoid. Functionally, DNA-binding protein that preferentially recognizes a curved DNA sequence. It is probably a functional analog of DnaJ; displays overlapping activities with DnaJ, but functions under different conditions, probably acting as a molecular chaperone in an adaptive response to environmental stresses other than heat shock. Lacks autonomous chaperone activity; binds native substrates and targets them for recognition by DnaK. Its activity is inhibited by the binding of CbpM. This Citrobacter koseri (strain ATCC BAA-895 / CDC 4225-83 / SGSC4696) protein is Curved DNA-binding protein.